Reading from the N-terminus, the 41-residue chain is Virescein (41 aa).

At His-41 the chain carries Histidine amide.

In terms of assembly, monomer. Hemolymph.

Its subcellular location is the secreted. Has antibacterial activity against Gram-positive and Gram-negative bacteria. The chain is Virescein from Heliothis virescens (Tobacco budworm moth).